Reading from the N-terminus, the 233-residue chain is Purine nucleoside phosphorylase DeoD-type (233 aa).

A purine D-ribonucleoside is bound at residue H4. Residues G20, R24, R43, and 87-90 each bind phosphate; that span reads RIGT. A purine D-ribonucleoside is bound by residues 179-181 and 203-204; these read EME and SD. Residue D204 is the Proton donor of the active site.

It belongs to the PNP/UDP phosphorylase family. In terms of assembly, homohexamer; trimer of homodimers.

It carries out the reaction a purine D-ribonucleoside + phosphate = a purine nucleobase + alpha-D-ribose 1-phosphate. The enzyme catalyses a purine 2'-deoxy-D-ribonucleoside + phosphate = a purine nucleobase + 2-deoxy-alpha-D-ribose 1-phosphate. In terms of biological role, catalyzes the reversible phosphorolytic breakdown of the N-glycosidic bond in the beta-(deoxy)ribonucleoside molecules, with the formation of the corresponding free purine bases and pentose-1-phosphate. This Helicobacter pylori (strain G27) protein is Purine nucleoside phosphorylase DeoD-type.